Consider the following 394-residue polypeptide: 1-deoxy-D-xylulose 5-phosphate reductoisomerase (394 aa).

NADPH contacts are provided by threonine 10, glycine 11, serine 12, isoleucine 13, glycine 38, arginine 39, asparagine 40, and asparagine 123. 1-deoxy-D-xylulose 5-phosphate is bound at residue lysine 124. Glutamate 125 is a binding site for NADPH. Aspartate 149 lines the Mn(2+) pocket. Positions 150, 151, 175, and 198 each coordinate 1-deoxy-D-xylulose 5-phosphate. A Mn(2+)-binding site is contributed by glutamate 151. Glycine 204 contributes to the NADPH binding site. Residues serine 211, asparagine 216, lysine 217, and glutamate 220 each coordinate 1-deoxy-D-xylulose 5-phosphate. Residue glutamate 220 participates in Mn(2+) binding.

The protein belongs to the DXR family. Requires Mg(2+) as cofactor. It depends on Mn(2+) as a cofactor.

The enzyme catalyses 2-C-methyl-D-erythritol 4-phosphate + NADP(+) = 1-deoxy-D-xylulose 5-phosphate + NADPH + H(+). The protein operates within isoprenoid biosynthesis; isopentenyl diphosphate biosynthesis via DXP pathway; isopentenyl diphosphate from 1-deoxy-D-xylulose 5-phosphate: step 1/6. Functionally, catalyzes the NADPH-dependent rearrangement and reduction of 1-deoxy-D-xylulose-5-phosphate (DXP) to 2-C-methyl-D-erythritol 4-phosphate (MEP). This is 1-deoxy-D-xylulose 5-phosphate reductoisomerase from Cereibacter sphaeroides (strain KD131 / KCTC 12085) (Rhodobacter sphaeroides).